The following is a 296-amino-acid chain: Nucleotide-binding protein Spy49_0545 (296 aa).

Glycine 13 to threonine 20 contacts ATP. Aspartate 63–serine 66 lines the GTP pocket.

The protein belongs to the RapZ-like family.

Its function is as follows. Displays ATPase and GTPase activities. In Streptococcus pyogenes serotype M49 (strain NZ131), this protein is Nucleotide-binding protein Spy49_0545.